Here is a 443-residue protein sequence, read N- to C-terminus: dTDP-4-dehydro-6-deoxy-alpha-D-glucopyranose 2,3-dehydratase (443 aa).

DTDP-4-dehydro-6-deoxy-alpha-D-glucose contacts are provided by residues Trp-35, 118 to 122, Ser-157, Trp-260, Arg-325, 341 to 343, 346 to 347, and 377 to 380; these read TFSNY, QCN, NL, and EGGR.

The protein belongs to the hexose 2,3-dehydratase family. In terms of assembly, homodimer.

The enzyme catalyses dTDP-4-dehydro-6-deoxy-alpha-D-glucose = dTDP-3,4-didehydro-2,6-dideoxy-alpha-D-glucose + H2O. It functions in the pathway antibiotic biosynthesis; granaticin biosynthesis. Functionally, involved in the biosynthesis of the 2,6-deoxysugar, dTDP-L-rhodinose, attached to the benzoisochromane quinone chromophore to produce the aglycone antibiotics granaticin and granaticin B. Catalyzes the removal of the hydroxyl group at position C-2 of the hexose ring of dTDP-4-dehydro-6-deoxy-alpha-D-glucopyranose, and the oxidation of the hydroxyl group at position C-3 to form a carbonyl functionality. The product of the reaction, dTDP-2,6-dideoxy-D-glycero-hex-2-enos-4-ulose, is a highly unstable diketosugar, which spontaneously forms dTDP-3,4-didehydro-2,6-dideoxy-alpha-D-glucose. This is dTDP-4-dehydro-6-deoxy-alpha-D-glucopyranose 2,3-dehydratase from Streptomyces violaceoruber.